The primary structure comprises 1480 residues: Cystic fibrosis transmembrane conductance regulator (1480 aa).

Over 1 to 77 (MQRSPLEKAS…KLINALRRCF (77 aa)) the chain is Cytoplasmic. Residues 78 to 98 (FWRFMFYGIFLYLGEVTKAVQ) traverse the membrane as a helical segment. An ABC transmembrane type-1 1 domain is found at 81-365 (FMFYGIFLYL…WAVQTWYDSL (285 aa)). Residues 99–122 (PLLLGRIIASYDPDNKEERSIAIY) are Extracellular-facing. A helical transmembrane segment spans residues 123 to 146 (LGIGLCLLFIVRTLLLHPAIFGLH). Topologically, residues 147–195 (HIGMQMRIAMFSLIYKKTLKLSSRVLDKISIGQLVSLLSNNLNKFDEGL) are cytoplasmic. A helical transmembrane segment spans residues 196-216 (ALAHFVWIAPLQVALLMGLIW). At 217-222 (ELLQAS) the chain is on the extracellular side. Residues 223-243 (AFCGLGFLIVLALFQAGLGRM) traverse the membrane as a helical segment. Over 244-298 (MMKYRDQRAGKINERLVITSEMIENIQSVKAYCWEEAMEKMIENLRQTELKLTRK) the chain is Cytoplasmic. Residues 299-319 (AAYVRYFNSSAFFFSGFFVVF) traverse the membrane as a helical segment. The Extracellular segment spans residues 320-339 (LSVLPYALIKGIVLRKIFTT). A helical transmembrane segment spans residues 340-358 (ISFCIVLRMAVTRQFPWAV). Residues 359–858 (QTWYDSLGAI…YLRYITVHKS (500 aa)) are Cytoplasmic-facing. Residues tryptophan 401, serine 434, 458-465 (GSTGAGKT), and glutamine 493 contribute to the ATP site. Positions 423 to 646 (NGDDSLFFSN…RPDFSSKLMG (224 aa)) constitute an ABC transporter 1 domain. Cysteine 524 carries S-palmitoyl cysteine lipidation. Serine 549 and serine 660 each carry phosphoserine. The interval 654-831 (SAERRNSILT…EEINEEDLKE (178 aa)) is disordered R region. Serine 670 carries the post-translational modification Phosphoserine; by PKA. Lysine 688 is covalently cross-linked (Glycyl lysine isopeptide (Lys-Gly) (interchain with G-Cter in ubiquitin)). Phosphoserine is present on residues serine 700 and serine 712. Residue threonine 717 is modified to Phosphothreonine. 6 positions are modified to phosphoserine: serine 737, serine 753, serine 768, serine 790, serine 795, and serine 813. The chain crosses the membrane as a helical span at residues 859-879 (LIFVLIWCLVIFLAEVAASLV). The 297-residue stretch at 859–1155 (LIFVLIWCLV…AVNSSIDVDS (297 aa)) folds into the ABC transmembrane type-1 2 domain. The Extracellular portion of the chain corresponds to 880–918 (VLWLLGNTPLQDKGNSTHSRNNSYAVIITSTSSYYVFYI). Residues asparagine 894 and asparagine 900 are each glycosylated (N-linked (GlcNAc...) asparagine). A discontinuously helical transmembrane segment spans residues 919–939 (YVGVADTLLAMGFFRGLPLVH). The Cytoplasmic segment spans residues 940-990 (TLITVSKILHNKMLHSVLQAPMSTLNTLKAGGILNRFSKDIAILDDLLPLT). The helical transmembrane segment at 991 to 1011 (IFDFIQLLLIVIGAIAVVAVL) threads the bilayer. Residues 1012-1013 (QP) lie on the Extracellular side of the membrane. The helical transmembrane segment at 1014 to 1034 (YIFVATVPVIVAFIMLRAYFL) threads the bilayer. Residues 1035-1095 (QTSQQLKQLE…TANWFLYLST (61 aa)) lie on the Cytoplasmic side of the membrane. The chain crosses the membrane as a helical span at residues 1096–1116 (LRWFQMRIEMIFVIFFIAVTF). Topologically, residues 1117–1130 (ISILTTGEGEGRVG) are extracellular. Residues 1131–1151 (IILTLAMNIMSTLQWAVNSSI) form a helical membrane-spanning segment. Topologically, residues 1152-1480 (DVDSLMRSVS…TEEEVQDTRL (329 aa)) are cytoplasmic. The region spanning 1210–1443 (MTVKDLTAKY…RSLFQQAISP (234 aa)) is the ABC transporter 2 domain. Residues tyrosine 1219 and 1244-1251 (GRTGSGKS) each bind ATP. Residues 1386–1480 (RTLKQAFADC…TEEEVQDTRL (95 aa)) form an interaction with GORASP2 region. Cysteine 1395 carries the S-palmitoyl cysteine lipid modification. Phosphoserine is present on residues serine 1444 and serine 1456. Positions 1452-1480 (HRNSSKCKSKPQIAALKEETEEEVQDTRL) are disordered. Residues 1470–1480 (ETEEEVQDTRL) are compositionally biased toward acidic residues. A PDZ-binding motif is present at residues 1478 to 1480 (TRL).

The protein belongs to the ABC transporter superfamily. ABCC family. CFTR transporter (TC 3.A.1.202) subfamily. Monomer; does not require oligomerization for channel activity. May form oligomers in the membrane. Interacts with SLC26A3, SLC26A6 and NHERF1. Interacts with SHANK2. Interacts with MYO6. Interacts (via C-terminus) with GOPC (via PDZ domain); this promotes CFTR internalization and thereby decreases channel activity. Interacts with SLC4A7 through NHERF1. Found in a complex with MYO5B and RAB11A. Interacts with ANO1. Interacts with SLC26A8. Interacts with AHCYL1; the interaction increases CFTR activity. Interacts with CSE1L. The core-glycosylated form interacts with GORASP2 (via PDZ GRASP-type 1 domain) in respone to ER stress. Interacts with MARCHF2; the interaction leads to CFTR ubiqtuitination and degradation. Interacts with ADGRG2. In terms of processing, N-glycosylated. Post-translationally, phosphorylated; cAMP treatment promotes phosphorylation and activates the channel. Dephosphorylation decreases the ATPase activity (in vitro). Phosphorylation at PKA sites activates the channel. Phosphorylation at PKC sites enhances the response to phosphorylation by PKA. Phosphorylated by AMPK; this inhibits channel activity. Ubiquitinated, leading to its degradation in the lysosome. Deubiquitination by USP10 in early endosomes enhances its endocytic recycling to the cell membrane. Ubiquitinated by RNF185 during ER stress. Ubiquitinated by MARCHF2.

The protein localises to the apical cell membrane. It is found in the early endosome membrane. Its subcellular location is the cell membrane. It localises to the recycling endosome membrane. The protein resides in the endoplasmic reticulum membrane. The protein localises to the nucleus. The catalysed reaction is ATP + H2O + closed Cl(-) channel = ADP + phosphate + open Cl(-) channel.. It carries out the reaction chloride(in) = chloride(out). The enzyme catalyses hydrogencarbonate(in) = hydrogencarbonate(out). It catalyses the reaction ATP + H2O = ADP + phosphate + H(+). Functionally, epithelial ion channel that plays an important role in the regulation of epithelial ion and water transport and fluid homeostasis. Mediates the transport of chloride ions across the cell membrane. Possesses an intrinsic ATPase activity and utilizes ATP to gate its channel; the passive flow of anions through the channel is gated by cycles of ATP binding and hydrolysis by the ATP-binding domains. The ion channel is also permeable to HCO(3)(-); selectivity depends on the extracellular chloride concentration. Exerts its function also by modulating the activity of other ion channels and transporters. Contributes to the regulation of the pH and the ion content of the epithelial fluid layer. Modulates the activity of the epithelial sodium channel (ENaC) complex, in part by regulating the cell surface expression of the ENaC complex. May regulate bicarbonate secretion and salvage in epithelial cells by regulating the transporter SLC4A7. Can inhibit the chloride channel activity of ANO1. Plays a role in the chloride and bicarbonate homeostasis during sperm epididymal maturation and capacitation. In Pongo abelii (Sumatran orangutan), this protein is Cystic fibrosis transmembrane conductance regulator.